The chain runs to 215 residues: Osmoprotectant import permease protein OsmW (215 aa).

One can recognise an ABC transmembrane type-1 domain in the interval 18–202 (TFQHLWLVAL…LLAIVLDWLL (185 aa)). 6 helical membrane passes run 24-44 (LVAL…VLIV), 51-73 (TPVL…GLMI), 78-100 (LIGH…LLPI), 132-152 (WVEI…AVVM), 153-173 (NIGV…LLLL), and 183-203 (MLIA…WLLH).

This sequence belongs to the binding-protein-dependent transport system permease family. The complex is composed of two ATP-binding proteins (OsmV), two transmembrane proteins (OsmW and OsmY) and a solute-binding protein (OsmX).

It is found in the cell inner membrane. Functionally, part of the OsmU ABC transporter complex, which is involved in the uptake of osmoprotectants such as choline-O-sulfate and glycine betaine. Probably responsible for the translocation of the substrate across the membrane. In Salmonella typhimurium (strain LT2 / SGSC1412 / ATCC 700720), this protein is Osmoprotectant import permease protein OsmW (osmW).